A 159-amino-acid polypeptide reads, in one-letter code: Ribosomal RNA large subunit methyltransferase H (159 aa).

Residues Leu-76, Gly-108, and 127 to 132 (FGKLTM) contribute to the S-adenosyl-L-methionine site.

Belongs to the RNA methyltransferase RlmH family. In terms of assembly, homodimer.

It localises to the cytoplasm. It carries out the reaction pseudouridine(1915) in 23S rRNA + S-adenosyl-L-methionine = N(3)-methylpseudouridine(1915) in 23S rRNA + S-adenosyl-L-homocysteine + H(+). Specifically methylates the pseudouridine at position 1915 (m3Psi1915) in 23S rRNA. The polypeptide is Ribosomal RNA large subunit methyltransferase H (Lacticaseibacillus casei (strain BL23) (Lactobacillus casei)).